Reading from the N-terminus, the 249-residue chain is Leucyl/phenylalanyl-tRNA--protein transferase (249 aa).

A disordered region spans residues 1 to 21; it reads MSRTLPHLLSPDPASPFPPAE.

This sequence belongs to the L/F-transferase family.

It localises to the cytoplasm. It catalyses the reaction N-terminal L-lysyl-[protein] + L-leucyl-tRNA(Leu) = N-terminal L-leucyl-L-lysyl-[protein] + tRNA(Leu) + H(+). The catalysed reaction is N-terminal L-arginyl-[protein] + L-leucyl-tRNA(Leu) = N-terminal L-leucyl-L-arginyl-[protein] + tRNA(Leu) + H(+). It carries out the reaction L-phenylalanyl-tRNA(Phe) + an N-terminal L-alpha-aminoacyl-[protein] = an N-terminal L-phenylalanyl-L-alpha-aminoacyl-[protein] + tRNA(Phe). In terms of biological role, functions in the N-end rule pathway of protein degradation where it conjugates Leu, Phe and, less efficiently, Met from aminoacyl-tRNAs to the N-termini of proteins containing an N-terminal arginine or lysine. The sequence is that of Leucyl/phenylalanyl-tRNA--protein transferase from Xanthomonas campestris pv. campestris (strain B100).